A 952-amino-acid polypeptide reads, in one-letter code: Isoleucine--tRNA ligase (952 aa).

The short motif at 58-68 is the 'HIGH' region element; the sequence is PYANGDIHIGH. Glutamate 576 serves as a coordination point for L-isoleucyl-5'-AMP. The 'KMSKS' region motif lies at 617–621; sequence KMSKS. Lysine 620 is a binding site for ATP. The Zn(2+) site is built by cysteine 915, cysteine 918, cysteine 935, and cysteine 938.

This sequence belongs to the class-I aminoacyl-tRNA synthetase family. IleS type 1 subfamily. As to quaternary structure, monomer. The cofactor is Zn(2+).

The protein localises to the cytoplasm. It catalyses the reaction tRNA(Ile) + L-isoleucine + ATP = L-isoleucyl-tRNA(Ile) + AMP + diphosphate. Functionally, catalyzes the attachment of isoleucine to tRNA(Ile). As IleRS can inadvertently accommodate and process structurally similar amino acids such as valine, to avoid such errors it has two additional distinct tRNA(Ile)-dependent editing activities. One activity is designated as 'pretransfer' editing and involves the hydrolysis of activated Val-AMP. The other activity is designated 'posttransfer' editing and involves deacylation of mischarged Val-tRNA(Ile). In Vibrio atlanticus (strain LGP32) (Vibrio splendidus (strain Mel32)), this protein is Isoleucine--tRNA ligase.